The primary structure comprises 126 residues: UPF0231 protein VC0395_A0134/VC395_0622 (126 aa).

This sequence belongs to the UPF0231 family.

This Vibrio cholerae serotype O1 (strain ATCC 39541 / Classical Ogawa 395 / O395) protein is UPF0231 protein VC0395_A0134/VC395_0622.